Reading from the N-terminus, the 811-residue chain is DEP domain-containing protein 1A (811 aa).

A DEP domain is found at 24 to 108 (FRAGMPLRKH…DNNQLFRFPA (85 aa)). Positions 281-321 (DYFLDLPEPLLTFEYYELFVNILVVCGYITVSDRSSGIHKI) constitute a Rho-GAP domain. Serine 512 is modified (phosphoserine). Positions 598-653 (AIDALQLCCLLLPPPNRRKLQLLMRMISRMSQNVDMPKLHDAMGTRSLMIHTFSRC) are interaction with ZNF224.

Isoform 2 and isoform 5 can form homodimers and heterodimers. Interacts with ZNF224. Expressed in testis. Up-regulated in bladder cancer cells (at protein level).

The protein localises to the nucleus. In terms of biological role, may be involved in transcriptional regulation as a transcriptional corepressor. The DEPDC1A-ZNF224 complex may play a critical role in bladder carcinogenesis by repressing the transcription of the A20 gene, leading to transport of NF-KB protein into the nucleus, resulting in suppression of apoptosis of bladder cancer cells. This chain is DEP domain-containing protein 1A (DEPDC1), found in Homo sapiens (Human).